The following is a 317-amino-acid chain: L-lactate dehydrogenase (317 aa).

Residues V17, D38, K43, Y68, and 82–83 (GV) contribute to the NAD(+) site. R91 serves as a coordination point for substrate. NAD(+) is bound by residues S104, 121-123 (VSN), and S146. 123-126 (NPVD) is a substrate binding site. 151-154 (DTSR) is a binding site for substrate. Beta-D-fructose 1,6-bisphosphate contacts are provided by K156 and H171. The active-site Proton acceptor is H178. Y224 carries the post-translational modification Phosphotyrosine. T233 contacts substrate.

The protein belongs to the LDH/MDH superfamily. LDH family. As to quaternary structure, homotetramer.

Its subcellular location is the cytoplasm. It catalyses the reaction (S)-lactate + NAD(+) = pyruvate + NADH + H(+). It functions in the pathway fermentation; pyruvate fermentation to lactate; (S)-lactate from pyruvate: step 1/1. Its activity is regulated as follows. Allosterically activated by fructose 1,6-bisphosphate (FBP). Its function is as follows. Catalyzes the conversion of lactate to pyruvate. The protein is L-lactate dehydrogenase of Clostridium perfringens (strain SM101 / Type A).